Here is a 178-residue protein sequence, read N- to C-terminus: Caveolin-1 (178 aa).

Residue Ser2 is modified to N-acetylserine. A Phosphoserine modification is found at Ser2. Positions 2 to 94 (SGGKYVDSEG…WKASFTTFTV (93 aa)) are required for homooligomerization. Residues 2 to 104 (SGGKYVDSEG…TKYWFYRLLS (103 aa)) are Cytoplasmic-facing. The residue at position 5 (Lys5) is an N6-acetyllysine; alternate. Lys5 participates in a covalent cross-link: Glycyl lysine isopeptide (Lys-Gly) (interchain with G-Cter in ubiquitin); alternate. Tyr6 is modified (phosphotyrosine). Ser9 carries the phosphoserine modification. Tyr14 is modified (phosphotyrosine; by ABL1). Tyr25 bears the Phosphotyrosine mark. Residues Lys26 and Lys30 each participate in a glycyl lysine isopeptide (Lys-Gly) (interchain with G-Cter in ubiquitin) cross-link. The residue at position 37 (Ser37) is a Phosphoserine. Glycyl lysine isopeptide (Lys-Gly) (interchain with G-Cter in ubiquitin) cross-links involve residues Lys39, Lys47, and Lys57. The tract at residues 82 to 94 (DGIWKASFTTFTV) is interaction with CAVIN3. Positions 105–125 (ALFGIPMALIWGIYFAILSFL) form an intramembrane region, helical. Residues 126-178 (HIWAVVPCIKSFLIEIQCISRVYSIYIHTVCDPLFEAIGKIFSNVRIGLQKEI) lie on the Cytoplasmic side of the membrane. An interacts with SPRY1, SPRY2, SPRY3 and SPRY4 region spans residues 131–142 (VPCIKSFLIEIQ). Residues Cys133, Cys143, and Cys156 are each lipidated (S-palmitoyl cysteine). An interacts with SPRY1, SPRY2, and SPRY4 region spans residues 149-160 (SIYIHTVCDPLF). The segment at 167-178 (FSNVRIGLQKEI) is interacts with SPRY1, SPRY2, SPRY3 and SPRY4.

The protein belongs to the caveolin family. Homooligomer. Interacts with GLIPR2. Interacts with NOSTRIN. Interacts with SNAP25 and STX1A. Interacts (via the N-terminus) with DPP4; the interaction is direct. Interacts with CTNNB1, CDH1 and JUP. Interacts with PACSIN2; this interaction induces membrane tubulation. Interacts with SLC7A9. Interacts with BMX and BTK. Interacts with TGFBR1. Interacts with CAVIN3 (via leucine-zipper domain) in a cholesterol-sensitive manner. Interacts with CAVIN1. Interacts with EHD2 in a cholesterol-dependent manner. Forms a ternary complex with UBXN6 and VCP; mediates CAV1 targeting to lysosomes for degradation. Interacts with ABCG1; this interaction regulates ABCG1-mediated cholesterol efflux. Interacts with NEU3; this interaction enhances NEU3 sialidase activity within caveola. Interacts (via C-terminus) with SPRY1, SPRY2 (via C-terminus), SPRY3, and SPRY4. Interacts with IGFBP5; this interaction allows trafficking of IGFBP5 from the plasma membrane to the nucleus. In terms of processing, phosphorylated at Tyr-14 by ABL1 in response to oxidative stress. Post-translationally, ubiquitinated. Undergo monoubiquitination and multi- and/or polyubiquitination. Monoubiquitination of N-terminal lysines promotes integration in a ternary complex with UBXN6 and VCP which promotes oligomeric CAV1 targeting to lysosomes for degradation. Ubiquitinated by ZNRF1; leading to degradation and modulation of the TLR4-mediated immune response.

The protein resides in the golgi apparatus membrane. The protein localises to the cell membrane. It is found in the membrane. It localises to the caveola. Its subcellular location is the membrane raft. In terms of biological role, may act as a scaffolding protein within caveolar membranes. Forms a stable heterooligomeric complex with CAV2 that targets to lipid rafts and drives caveolae formation. Mediates the recruitment of CAVIN proteins (CAVIN1/2/3/4) to the caveolae. Interacts directly with G-protein alpha subunits and can functionally regulate their activity. Involved in the costimulatory signal essential for T-cell receptor (TCR)-mediated T-cell activation. Its binding to DPP4 induces T-cell proliferation and NF-kappa-B activation in a T-cell receptor/CD3-dependent manner. Recruits CTNNB1 to caveolar membranes and may regulate CTNNB1-mediated signaling through the Wnt pathway. Negatively regulates TGFB1-mediated activation of SMAD2/3 by mediating the internalization of TGFBR1 from membrane rafts leading to its subsequent degradation. Binds 20(S)-hydroxycholesterol (20(S)-OHC). This chain is Caveolin-1 (CAV1), found in Saimiri boliviensis boliviensis (Bolivian squirrel monkey).